A 45-amino-acid chain; its full sequence is Bomanin Short 1 (45 aa).

Residues 1–20 (MKFFSVVTVFVLGLLAVANA) form the signal peptide. Residues 21-27 (VPLSPDP) constitute a propeptide, removed by a dipeptidylpeptidase. A disulfide bridge links cysteine 36 with cysteine 39. Glycine 43 is modified (glycine amide).

In terms of tissue distribution, hemolymph (at protein level).

It is found in the secreted. Secreted immune-induced peptide induced by Toll signaling. Has a role in resistance to bacterial and fungal infections. Has no activity against the fungus C.glabrata in vitro. The sequence is that of Bomanin Short 1 from Drosophila melanogaster (Fruit fly).